A 440-amino-acid chain; its full sequence is Gap junction alpha-8 protein (440 aa).

Residues 2 to 12 lie within the membrane without spanning it; sequence GDWSFLGNILE. The Cytoplasmic segment spans residues 13-21; sequence EVNEHSTVI. Residues 22–42 traverse the membrane as a helical segment; that stretch reads GRVWLTVLFIFRILILGTAAE. Residues 43–71 lie on the Extracellular side of the membrane; sequence FVWGDEQSDFVCNTQQPGCENVCYDEAFP. 3 disulfides stabilise this stretch: Cys54–Cys201, Cys61–Cys195, and Cys65–Cys190. A helical transmembrane segment spans residues 72 to 92; sequence ISHIRLWVLQIIFVSTPSLVY. Residues 93–161 are Cytoplasmic-facing; the sequence is VGHAVHHVRM…GTLLRTYVCH (69 aa). The tract at residues 108–144 is disordered; that stretch reads EREAEELSQQSPGNGGERAPLAADQGSVKKSSSSSKG. Residues 162 to 182 form a helical membrane-spanning segment; the sequence is IIFKTLFEVGFIVGHYFLYGF. Residues 183–210 are Extracellular-facing; that stretch reads RILPLYRCSRWPCPNVVDCFVSRPTEKT. A helical membrane pass occupies residues 211-231; sequence IFILFMLSVASVSLFLNILEM. The Cytoplasmic portion of the chain corresponds to 232–440; the sequence is SHLGLKKIRS…SRARSDDLTV (209 aa). A disordered region spans residues 334–440; that stretch reads GAQEGVEEEQ…SRARSDDLTV (107 aa). 2 stretches are compositionally biased toward basic and acidic residues: residues 353–365 and 375–405; these read VGDKSQEAERVST and EEEKVEPPEVEKEAEKEETPPEKVSKQELTP. Residues 423–432 are compositionally biased toward low complexity; the sequence is LSRLSKASSR.

The protein belongs to the connexin family. Alpha-type (group II) subfamily. As to quaternary structure, a hemichannel or connexon is composed of a hexamer of connexins. A functional gap junction is formed by the apposition of two hemichannels. Forms heteromeric channels with GJA3. As to expression, detected in eye lens (at protein level). Eye lens.

It is found in the cell membrane. The protein localises to the cell junction. It localises to the gap junction. Functionally, structural component of eye lens gap junctions. Gap junctions are dodecameric channels that connect the cytoplasm of adjoining cells. They are formed by the docking of two hexameric hemichannels, one from each cell membrane. Small molecules and ions diffuse from one cell to a neighboring cell via the central pore. The polypeptide is Gap junction alpha-8 protein (GJA8) (Ovis aries (Sheep)).